Here is a 620-residue protein sequence, read N- to C-terminus: Translation initiation factor IF-2 (620 aa).

Residues 119–288 (ERPPIVTIMG…IILISELENL (170 aa)) enclose the tr-type G domain. Residues 128-135 (GHVDHGKT) are G1. Residue 128–135 (GHVDHGKT) participates in GTP binding. The interval 153-157 (GITQA) is G2. The G3 stretch occupies residues 175 to 178 (DTPG). Residues 175–179 (DTPGH) and 229–232 (NKID) each bind GTP. Positions 229 to 232 (NKID) are G4. Residues 265–267 (SAI) form a G5 region.

Belongs to the TRAFAC class translation factor GTPase superfamily. Classic translation factor GTPase family. IF-2 subfamily.

It localises to the cytoplasm. In terms of biological role, one of the essential components for the initiation of protein synthesis. Protects formylmethionyl-tRNA from spontaneous hydrolysis and promotes its binding to the 30S ribosomal subunits. Also involved in the hydrolysis of GTP during the formation of the 70S ribosomal complex. The sequence is that of Translation initiation factor IF-2 from Mycoplasma mycoides subsp. mycoides SC (strain CCUG 32753 / NCTC 10114 / PG1).